A 610-amino-acid polypeptide reads, in one-letter code: L-galactono-1,4-lactone dehydrogenase, mitochondrial (610 aa).

Residues 1 to 35 constitute a mitochondrion transit peptide; it reads MLRSLLLRRSVGHSLGTLSPSSSTIRSSFSPHRTL. A disordered region spans residues 17-61; the sequence is TLSPSSSTIRSSFSPHRTLCTTGQTLTPPPPPPPRPPPPPPATAS. Positions 19-30 are enriched in low complexity; the sequence is SPSSSTIRSSFS. Positions 36 to 101 are cleaved as a propeptide — removed in mature form; sequence CTTGQTLTPP…AKHKKAQIFR (66 aa). Residues 43 to 58 are compositionally biased toward pro residues; that stretch reads TPPPPPPPRPPPPPPA. Residues 68-84 form a helical membrane-spanning segment; it reads YAGYAALAIFSGVATYF. Positions 123-258 constitute an FAD-binding PCMH-type domain; that stretch reads TRNFNQPENL…TPAKGTIELS (136 aa).

Requires FAD as cofactor.

The protein localises to the mitochondrion membrane. It carries out the reaction L-galactono-1,4-lactone + 4 Fe(III)-[cytochrome c] = L-dehydroascorbate + 4 Fe(II)-[cytochrome c] + 5 H(+). It catalyses the reaction L-gulono-1,4-lactone + 2 Fe(III)-[cytochrome c] = L-ascorbate + 2 Fe(II)-[cytochrome c] + 3 H(+). The protein operates within cofactor biosynthesis; L-ascorbate biosynthesis. Its function is as follows. Involved in the biosynthesis of ascorbate. Catalyzes the final step of ascorbate biosynthesis. Uses L-galactono-1,4-lactone and L-gulono-1,4-lactone as substrates, but not D-galactono-1,4-lactone, D-gulono-1,4-lactone, L-mannono-1,4-lactone or D-galactonic acid. Also active with phenazine methosulfate and 1,4-benzoquinone as electron acceptors. Involved in the regulation of the accumulation of the mitochondrial respiratory complex I. Structural part of one of the plant-specific mitochondrial complex I assembly intermediates, lacking the whole distal (PD) module. Prevents the binding of the plant specific P1 protein (CPN60/HSP60), responsible for the linkage of the proximal (PP) to the distal (PD) module. In Arabidopsis thaliana (Mouse-ear cress), this protein is L-galactono-1,4-lactone dehydrogenase, mitochondrial.